A 30-amino-acid chain; its full sequence is Trypsin inhibitor 2 (30 aa).

3 cysteine pairs are disulfide-bonded: cysteine 2–cysteine 19, cysteine 9–cysteine 21, and cysteine 15–cysteine 27.

It belongs to the protease inhibitor I7 (squash-type serine protease inhibitor) family.

The protein resides in the secreted. Its function is as follows. Inhibits trypsin. This Ecballium elaterium (Squirting cucumber) protein is Trypsin inhibitor 2.